The following is a 328-amino-acid chain: Probable cell division protein WhiA (328 aa).

A DNA-binding region (H-T-H motif) is located at residues 273–306 (SLEELGALADPPLTKDAVAGRIRRLLAMADKRAS).

Belongs to the WhiA family. As to quaternary structure, monomer in solution.

Functionally, involved in cell division and chromosome segregation. Involved in sporulation. May coordinate the cessation of aerial hyphae growth and subsequent chromosome segregation and/or septation. Required for expression of the ParB partioning protein during sporogenesis. Activates its own transcription and represses WhiB. Binds with low affinity to its own promoter and to the Parp2 sporulation-specific promoter. Also binds directly to the RNA polymerase sigma factor WhiG, leading to inhibition of WhiG-dependent transcription in a dose-dependent manner. In Streptomyces coelicolor (strain ATCC BAA-471 / A3(2) / M145), this protein is Probable cell division protein WhiA.